We begin with the raw amino-acid sequence, 392 residues long: 5-amino-6-(D-ribitylamino)uracil--L-tyrosine 4-hydroxyphenyl transferase (392 aa).

Residues 60 to 307 enclose the Radical SAM core domain; the sequence is VTYVVNRNIN…MAIARLYLGK (248 aa). Residues Cys-74, Cys-78, and Cys-81 each contribute to the [4Fe-4S] cluster site.

This sequence belongs to the radical SAM superfamily. CofH family. As to quaternary structure, consists of two subunits, CofG and CofH. [4Fe-4S] cluster serves as cofactor.

It catalyses the reaction 5-amino-6-(D-ribitylamino)uracil + L-tyrosine + S-adenosyl-L-methionine = 5-amino-5-(4-hydroxybenzyl)-6-(D-ribitylimino)-5,6-dihydrouracil + 2-iminoacetate + 5'-deoxyadenosine + L-methionine + H(+). It functions in the pathway cofactor biosynthesis; coenzyme F0 biosynthesis. Its function is as follows. Catalyzes the radical-mediated synthesis of 5-amino-5-(4-hydroxybenzyl)-6-(D-ribitylimino)-5,6-dihydrouracil from 5-amino-6-(D-ribitylamino)uracil and L-tyrosine. The protein is 5-amino-6-(D-ribitylamino)uracil--L-tyrosine 4-hydroxyphenyl transferase of Synechocystis sp. (strain ATCC 27184 / PCC 6803 / Kazusa).